A 210-amino-acid polypeptide reads, in one-letter code: MSGPGTPFVIGVAGGSGSGKTTVTRRVIETVGREGVAVLNQDNYYRDQSDIPFESRLHTNYDHPAAFDWALLREQLDALLAGVPIEMPEYDFTQHTRAAHTTRVLPGRVVVLEGFFALYDEELRSRMGLKVFVDADADVRFIRRLLRDTQERGRTPESVIEQYLGFVRPMHLSFVEPTKRYADVIIPHGGMNEPALDMLAARIRVMAQRD.

Residue 14 to 21 (GGSGSGKT) participates in ATP binding.

The protein belongs to the uridine kinase family.

It is found in the cytoplasm. It catalyses the reaction uridine + ATP = UMP + ADP + H(+). The catalysed reaction is cytidine + ATP = CMP + ADP + H(+). It participates in pyrimidine metabolism; CTP biosynthesis via salvage pathway; CTP from cytidine: step 1/3. It functions in the pathway pyrimidine metabolism; UMP biosynthesis via salvage pathway; UMP from uridine: step 1/1. This chain is Uridine kinase, found in Deinococcus radiodurans (strain ATCC 13939 / DSM 20539 / JCM 16871 / CCUG 27074 / LMG 4051 / NBRC 15346 / NCIMB 9279 / VKM B-1422 / R1).